Consider the following 420-residue polypeptide: MPEDGPPKDIPDGLIEELALRAFFHDYCVVPVNTALSRGYLGGLEPMVHRLGLQSPVANACKAVAFASHGLKLSRPFLTKKGEILYHELLGSLARSIQNPALGAGPDIVVTAVLLGLYEMIMAGESNPGHHNAHAGGMAAILQIENSPLGLLQAARAGHPLVLNRMVQNNGMFISPSPGGGGQSLDTILVKLGSLWQKSETLLSNPQIPLFFDELYALREETTALNRDLILWQKAQSDNFKPTKVGYLSPSPYQLSPSAGFWPGQVDTYVDLYVAGVWNVSRVARCFLINLIVRLSNILDPTSDHRQYHNDVRELVGDIFASIPFHLTEDLGAFVAKRGANPEIANPGRPVGGLILLHPVYIASQLPVVPPDMQEYMRKCLAWIGKYMGIGQACLLAKAPRVEGQYFACGCMLVWAGLLI.

It localises to the nucleus. Transcription factor that coregulates the expression of the gene cluster that mediates the biosynthesis of the antibiotic 2,4- dihydroxy-3-methyl-6-(2-oxopropyl)benzaldehyde (DHMBA) and its derivatives. Specifically positively regulates the expression of the FAD-dependent oxidoreductase dbaF. This chain is Transcription factor dbaG, found in Emericella nidulans (strain FGSC A4 / ATCC 38163 / CBS 112.46 / NRRL 194 / M139) (Aspergillus nidulans).